The sequence spans 270 residues: Tryptophan synthase alpha chain (270 aa).

Catalysis depends on proton acceptor residues Glu-49 and Asp-60.

Belongs to the TrpA family. As to quaternary structure, tetramer of two alpha and two beta chains.

The catalysed reaction is (1S,2R)-1-C-(indol-3-yl)glycerol 3-phosphate + L-serine = D-glyceraldehyde 3-phosphate + L-tryptophan + H2O. It participates in amino-acid biosynthesis; L-tryptophan biosynthesis; L-tryptophan from chorismate: step 5/5. In terms of biological role, the alpha subunit is responsible for the aldol cleavage of indoleglycerol phosphate to indole and glyceraldehyde 3-phosphate. The sequence is that of Tryptophan synthase alpha chain from Pseudomonas savastanoi pv. phaseolicola (strain 1448A / Race 6) (Pseudomonas syringae pv. phaseolicola (strain 1448A / Race 6)).